The chain runs to 95 residues: Small ribosomal subunit protein uS19 (95 aa).

The interval 73–95 is disordered; that stretch reads EFSPTRTYRGHGADKNAKGSKKK.

Belongs to the universal ribosomal protein uS19 family.

Its function is as follows. Protein S19 forms a complex with S13 that binds strongly to the 16S ribosomal RNA. The protein is Small ribosomal subunit protein uS19 of Deinococcus geothermalis (strain DSM 11300 / CIP 105573 / AG-3a).